The sequence spans 131 residues: Small ribosomal subunit protein uS8 (131 aa).

It belongs to the universal ribosomal protein uS8 family. In terms of assembly, part of the 30S ribosomal subunit. Contacts proteins S5 and S12.

Its function is as follows. One of the primary rRNA binding proteins, it binds directly to 16S rRNA central domain where it helps coordinate assembly of the platform of the 30S subunit. This Chlorobium chlorochromatii (strain CaD3) protein is Small ribosomal subunit protein uS8.